We begin with the raw amino-acid sequence, 913 residues long: Calcium-activated chloride channel regulator 1 (913 aa).

The N-terminal stretch at 1-21 (MGSFKSSVFILVLHLLEGALS) is a signal peptide. The metalloprotease domain stretch occupies residues 46–199 (DETLIQQIKD…DIAGKNVVNH (154 aa)). Residue H156 coordinates Zn(2+). The active site involves E157. The Zn(2+) site is built by H160 and N167. The VWFA domain occupies 306-475 (IVCLVLDKSG…NGLIDAFGAL (170 aa)). N-linked (GlcNAc...) asparagine glycans are attached at residues N503, N514, N770, N804, N810, N836, and N885.

The protein belongs to the CLCR family. Glycosylated. In terms of processing, the translation product is autoproteolytically cleaved by the metalloprotease domain in the endoplasmic reticulum into a N-terminal and a C-terminal products that remain physically associated with each other. The cleavage is necessary for calcium-activated chloride channel (CaCC) activation activity. Expressed in mucin-producing cells in the respiratory and intestinal tracts, cutaneous sweat glands, and renal mucous glands (at protein level). Strong overexpression in the airways of horses with recurrent airway obstruction (at protein level).

The protein localises to the secreted. It localises to the extracellular space. Its function is as follows. May be involved in mediating calcium-activated chloride conductance. May play critical roles in goblet cell metaplasia, mucus hypersecretion, cystic fibrosis and AHR. May be involved in the regulation of mucus production and/or secretion by goblet cells. Involved in the regulation of tissue inflammation in the innate immune response. May play a role as a tumor suppressor. Induces MUC5AC. The protein is Calcium-activated chloride channel regulator 1 (CLCA1) of Equus caballus (Horse).